A 185-amino-acid chain; its full sequence is Large ribosomal subunit protein uL5 (185 aa).

The protein belongs to the universal ribosomal protein uL5 family. As to quaternary structure, part of the 50S ribosomal subunit; part of the 5S rRNA/L5/L18/L25 subcomplex. Contacts the 5S rRNA and the P site tRNA. Forms a bridge to the 30S subunit in the 70S ribosome.

Its function is as follows. This is one of the proteins that bind and probably mediate the attachment of the 5S RNA into the large ribosomal subunit, where it forms part of the central protuberance. In the 70S ribosome it contacts protein S13 of the 30S subunit (bridge B1b), connecting the 2 subunits; this bridge is implicated in subunit movement. Contacts the P site tRNA; the 5S rRNA and some of its associated proteins might help stabilize positioning of ribosome-bound tRNAs. This Rhizobium etli (strain ATCC 51251 / DSM 11541 / JCM 21823 / NBRC 15573 / CFN 42) protein is Large ribosomal subunit protein uL5.